The chain runs to 467 residues: MAPQLLLCLILTFLWSLPEAESNVFLKSKVANRFLQRTKRANSLFEEFRSGNIERECIEERCSKEEAREVFEDDEKTETFWNVYVDGDQCSSNPCHYRGTCKDGIGSYTCTCLFGYEGKNCERVLYKSCRVDNGNCWHFCKPVQNDIQCSCAEGYLLGEDGHSCVAGGNFSCGRNIKTRNKREASLPDFVQSQNATLLKKSDNPSPDIRIVNGMDCKLGECPWQAVLVDEKEGVFCGGTILSPIYVLTAAHCINQTEKISVVVGEIDKSRVETGHLLSVDKIYVHKKFVPPKKGYKFYEKFDLVSYDYDIAIIQMKTPIQFSENVVPACLPTADFANQVLMKQDFGIISGFGRIFEKGPKSNTLKVLKVPYVDRHTCMVSSESPITPTMFCAGYDTLPRDACQGDSGGPHITAYRDTHFITGIVSWGEGCAKKGKYGIYTKVSKFILWIKRIMRQKLPSTESSTGRL.

The signal sequence occupies residues 1–20 (MAPQLLLCLILTFLWSLPEA). Residues 21–40 (ESNVFLKSKVANRFLQRTKR) constitute a propeptide that is removed on maturation. The region spanning 41-86 (ANSLFEEFRSGNIERECIEERCSKEEAREVFEDDEKTETFWNVYVD) is the Gla domain. E46, E47, E54, E56, E59, E60, E65, E66, E69, E72, and E75 each carry 4-carboxyglutamate. A disulfide bridge links C57 with C62. The EGF-like 1; calcium-binding domain occupies 86 to 122 (DGDQCSSNPCHYRGTCKDGIGSYTCTCLFGYEGKNCE). 11 cysteine pairs are disulfide-bonded: C90-C101, C95-C110, C112-C121, C129-C140, C136-C149, C151-C164, C172-C329, C216-C221, C236-C252, C377-C391, and C402-C430. S92 is a glycosylation site (O-linked (Hex...) serine). One can recognise an EGF-like 2 domain in the interval 129-164 (CRVDNGNCWHFCKPVQNDIQCSCAEGYLLGEDGHSC). A propeptide spans 182 to 209 (REASLPDFVQSQNATLLKKSDNPSPDIR) (activation peptide). Residues 210-454 (IVNGMDCKLG…FILWIKRIMR (245 aa)) form the Peptidase S1 domain. Catalysis depends on H251, which acts as the Charge relay system. An N-linked (GlcNAc...) asparagine glycan is attached at N254. Catalysis depends on D309, which acts as the Charge relay system. The active-site Charge relay system is the S406.

It belongs to the peptidase S1 family. Snake venom subfamily. Heterodimer of a light and a heavy chains; disulfide-linked. Is associated with omicarin-C non-catalytic subunit (AC Q58L90) in a non-covalent manner. In terms of processing, gamma-carboxyglutamate residues are formed by vitamin K dependent carboxylation. These residues are essential for the binding of calcium. In terms of tissue distribution, expressed by the venom gland.

It localises to the secreted. The enzyme catalyses Selective cleavage of Arg-|-Thr and then Arg-|-Ile bonds in prothrombin to form thrombin.. With respect to regulation, activated by calcium and negatively charged phospholipids. Functionally, snake prothrombin activator that attacks the hemostatic system of prey. This catalytic subunit is functionally similar to blood coagulation factor Xa. It requires a non-catalytic subunit present in the venom, which is similar to coagulation factor Va, to be fully active. This chain is Venom prothrombin activator omicarin-C catalytic subunit, found in Oxyuranus microlepidotus (Inland taipan).